The chain runs to 148 residues: Snaclec convulxin subunit beta (148 aa).

Residues 1-23 (MGRFIFVSFGLLVVFLSLSGSEA) form the signal peptide. Intrachain disulfides connect Cys27-Cys38, Cys55-Cys144, and Cys121-Cys136. A C-type lectin domain is found at 34–148 (YDRYCYKVFK…TYSFVCKFEA (115 aa)).

The protein belongs to the snaclec family. Tetramer of heterodimers of alpha and beta subunits (alphabeta)(4); disulfide-linked. As to expression, expressed by the venom gland.

The protein localises to the secreted. In terms of biological role, snake venom lectin that activates platelets by binding to the platelet collagen receptor glycoprotein VI (GP6). The indirect activation of integrin alpha-IIb/beta-3 (ITGA2B/ITGB3) also induced by the toxin is upstream the cytoskeletal translocation of GPIb, FcRgamma (FCER1G) and 14-3-3zeta (YWHAZ). The protein is Snaclec convulxin subunit beta of Crotalus durissus terrificus (South American rattlesnake).